The following is an 804-amino-acid chain: Endoplasmin (804 aa).

The signal sequence occupies residues 1–21 (MRALWVLGLCCVLLTFGSVRA). An SRT pseudosubstrate motif motif is present at residues 42–44 (SRT). The N-linked (GlcNAc...) asparagine glycan is linked to Asn-62. Ser-64 is modified (phosphoserine). A glycan (N-linked (GlcNAc...) asparagine) is linked at Asn-107. Residues Asn-107, Asp-149, and Asn-162 each contribute to the ATP site. Lys-168 bears the N6-(2-hydroxyisobutyryl)lysine mark. Residue Ser-172 is modified to Phosphoserine. Phe-199 contributes to the ATP binding site. Asn-217 carries an N-linked (GlcNAc...) asparagine glycan. Positions 288–323 (TVEEPAEEEEAAKEDKEESDDEAAVEEEEDEKKPKT) are disordered. The span at 289–317 (VEEPAEEEEAAKEDKEESDDEAAVEEEED) shows a compositional bias: acidic residues. A phosphoserine mark is found at Ser-306 and Ser-403. Lys-404 bears the N6-succinyllysine mark. N-linked (GlcNAc...) asparagine glycosylation occurs at Asn-445. Ser-447 is subject to Phosphoserine. N6-acetyllysine is present on Lys-479. Asn-481 and Asn-502 each carry an N-linked (GlcNAc...) asparagine glycan. An N6-succinyllysine modification is found at Lys-633. The disordered stretch occupies residues 750 to 804 (DPDAKVEEEPEEEPEETTEDTAEDTEQDEEEEMDAGTDEEEQETAEKSTAEKDEL). Over residues 757–792 (EEPEEEPEETTEDTAEDTEQDEEEEMDAGTDEEEQE) the composition is skewed to acidic residues. The residue at position 786 (Thr-786) is a Phosphothreonine. Basic and acidic residues predominate over residues 793-804 (TAEKSTAEKDEL). The Prevents secretion from ER motif lies at 801 to 804 (KDEL).

It belongs to the heat shock protein 90 family. Homodimer; disulfide-linked. Component of an EIF2 complex at least composed of CELF1/CUGBP1, CALR, CALR3, EIF2S1, EIF2S2, HSP90B1 and HSPA5. Part of a large chaperone multiprotein complex comprising DNAJB11, HSP90B1, HSPA5, HYOU, PDIA2, PDIA4, PDIA6, PPIB, SDF2L1, UGGT1 and very small amounts of ERP29, but not, or at very low levels, CALR nor CANX. Interacts with AIMP1; regulates its retention in the endoplasmic reticulum. Hyperglycosylated form interacts with OS9; promoting its degradation by the endoplasmic reticulum associated degradation (ERAD). Interacts with CNPY3. This interaction is disrupted in the presence of ATP. Interacts with TLR4 and TLR9, but not with TLR3. Interacts with MZB1 in a calcium-dependent manner. Interacts with METTL23. Interacts with IL1B; the interaction facilitates cargo translocation into the ERGIC. Interacts with EIF2AK3. In terms of processing, phosphorylated by CK2. Post-translationally, N-glycosylated cotranslationally at Asn-217 by STT3A-containing OST-A complex: this glycosylation is constitutive. In response to various stress, 5 additional facultative sites (Asn-62, Asn-107, Asn-445, Asn-481 and Asn-502) can be glycosylated post-translationally by STT3B-containing OST-B complex, leading to a hyperglycosylated form that is degraded by the ER-associated degradation (ERAD) pathway. In normal conditions, the OST-A complex together with CCDC134 prevent glycosylation at facultative sites during protein folding, thereby preventing hyperglycosylation. Mechanistically, nascent HSP90B1 is tethered during translation to a specialized CCDC134-containing translocon that forms a microenvironment for its folding, in which STT3A associates with the SRT pseudosubstrate motif, and prevents access to facultative glycosylation sites until folding is completed, rendering its facultative sites inaccessible to the OST-B complex.

It localises to the endoplasmic reticulum lumen. It is found in the sarcoplasmic reticulum lumen. The protein resides in the melanosome. It carries out the reaction ATP + H2O = ADP + phosphate + H(+). Its function is as follows. ATP-dependent chaperone involved in the processing of proteins in the endoplasmic reticulum, regulating their transport. Together with MESD, acts as a modulator of the Wnt pathway by promoting the folding of LRP6, a coreceptor of the canonical Wnt pathway. When associated with CNPY3, required for proper folding of Toll-like receptors. Promotes folding and trafficking of TLR4 to the cell surface. May participate in the unfolding of cytosolic leaderless cargos (lacking the secretion signal sequence) such as the interleukin 1/IL-1 to facilitate their translocation into the ERGIC (endoplasmic reticulum-Golgi intermediate compartment) and secretion; the translocation process is mediated by the cargo receptor TMED10. This chain is Endoplasmin (HSP90B1), found in Bos taurus (Bovine).